A 366-amino-acid chain; its full sequence is Dual-specificity RNA methyltransferase RlmN (366 aa).

The active-site Proton acceptor is the E91. The Radical SAM core domain maps to 97 to 333; it reads EDDRGTLCVS…TTVRKTRGED (237 aa). C104 and C338 are disulfide-bonded. [4Fe-4S] cluster is bound by residues C111, C115, and C118. Residues 164–165, S196, 218–220, and N295 each bind S-adenosyl-L-methionine; these read GE and SLH. C338 (S-methylcysteine intermediate) is an active-site residue.

Belongs to the radical SAM superfamily. RlmN family. Requires [4Fe-4S] cluster as cofactor.

The protein localises to the cytoplasm. The catalysed reaction is adenosine(2503) in 23S rRNA + 2 reduced [2Fe-2S]-[ferredoxin] + 2 S-adenosyl-L-methionine = 2-methyladenosine(2503) in 23S rRNA + 5'-deoxyadenosine + L-methionine + 2 oxidized [2Fe-2S]-[ferredoxin] + S-adenosyl-L-homocysteine. The enzyme catalyses adenosine(37) in tRNA + 2 reduced [2Fe-2S]-[ferredoxin] + 2 S-adenosyl-L-methionine = 2-methyladenosine(37) in tRNA + 5'-deoxyadenosine + L-methionine + 2 oxidized [2Fe-2S]-[ferredoxin] + S-adenosyl-L-homocysteine. Specifically methylates position 2 of adenine 2503 in 23S rRNA and position 2 of adenine 37 in tRNAs. m2A2503 modification seems to play a crucial role in the proofreading step occurring at the peptidyl transferase center and thus would serve to optimize ribosomal fidelity. The chain is Dual-specificity RNA methyltransferase RlmN from Laribacter hongkongensis (strain HLHK9).